A 781-amino-acid chain; its full sequence is Dual specificity protein kinase zakA (781 aa).

Protein kinase domains follow at residues 9-317 (WEEI…HKLI) and 379-654 (DKDD…EIGL). Residues 15–23 (IGEGQYGRV) and Lys-44 each bind ATP. The active-site Proton acceptor is Asp-132. The segment at 168–209 (ETTNNNNNPNNNNNNNNNNNNNNNNNNNNNNNNNNINNINNN) is disordered. A compositionally biased stretch (low complexity) spans 171–209 (NNNNNPNNNNNNNNNNNNNNNNNNNNNNNNNNINNINNN). ATP-binding positions include 385–393 (GGAGNFGDV) and Lys-406. The active-site Proton acceptor is the Asp-507.

The protein in the N-terminal section; belongs to the protein kinase superfamily. Ser/Thr protein kinase family. This sequence in the C-terminal section; belongs to the protein kinase superfamily. TKL Tyr protein kinase family. In terms of processing, N-terminal serine/threonine domain is capable of autophosphorylation, in vitro, but to a lower extent than the tyrosine kinase domain. May function as a negative regulator of the tyrosine kinase domain. Post-translationally, C-terminal tyrosine kinase domain is capable of autophosphorylation, in vitro. As to expression, zakA and zak2 are coexpressed in prestalk cell population, zakA is enriched in pstB populations and zak1 in pstA populations. ZakA and zak2 are coexpressed in prespore cells, zakA expression levels are 10 fold higher than zak2.

It carries out the reaction L-seryl-[protein] + ATP = O-phospho-L-seryl-[protein] + ADP + H(+). The enzyme catalyses L-threonyl-[protein] + ATP = O-phospho-L-threonyl-[protein] + ADP + H(+). The catalysed reaction is L-tyrosyl-[protein] + ATP = O-phospho-L-tyrosyl-[protein] + ADP + H(+). Functionally, positive regulator of gsk3/gskA activity required for cell pattern formation and a downstream effector of carC. The kinases, gsk3/gskA, zakA and zak2, form part of a signaling pathway that responds to extracellular cyclic AMP. The pathway has a role in transcriptional regulation; required to direct prespore/spore fates during development. ZakA negatively regulates prestalk differentiation by regulating expression of ecmB. Phosphorylates Y-214 of gsk3/gskA, in vitro. The polypeptide is Dual specificity protein kinase zakA (zakA) (Dictyostelium discoideum (Social amoeba)).